The following is a 363-amino-acid chain: NAD(P)H-quinone oxidoreductase subunit 1, chloroplastic (363 aa).

The next 6 helical transmembrane spans lie at 30 to 50 (LVPI…IVWL), 98 to 118 (FSIG…VIPF), 129 to 149 (IGIF…LMSG), 248 to 268 (YSGI…LLSS), 300 to 320 (IIGT…FLFI), and 343 to 363 (FLLP…LLSL).

The protein belongs to the complex I subunit 1 family. In terms of assembly, NDH is composed of at least 16 different subunits, 5 of which are encoded in the nucleus.

It localises to the plastid. It is found in the chloroplast thylakoid membrane. The catalysed reaction is a plastoquinone + NADH + (n+1) H(+)(in) = a plastoquinol + NAD(+) + n H(+)(out). It catalyses the reaction a plastoquinone + NADPH + (n+1) H(+)(in) = a plastoquinol + NADP(+) + n H(+)(out). Its function is as follows. NDH shuttles electrons from NAD(P)H:plastoquinone, via FMN and iron-sulfur (Fe-S) centers, to quinones in the photosynthetic chain and possibly in a chloroplast respiratory chain. The immediate electron acceptor for the enzyme in this species is believed to be plastoquinone. Couples the redox reaction to proton translocation, and thus conserves the redox energy in a proton gradient. The sequence is that of NAD(P)H-quinone oxidoreductase subunit 1, chloroplastic from Gossypium hirsutum (Upland cotton).